A 108-amino-acid polypeptide reads, in one-letter code: Flagellar hook-basal body complex protein FliE (108 aa).

Belongs to the FliE family.

It localises to the bacterial flagellum basal body. This chain is Flagellar hook-basal body complex protein FliE, found in Pseudomonas fluorescens (strain ATCC BAA-477 / NRRL B-23932 / Pf-5).